Consider the following 245-residue polypeptide: tRNA pseudouridine synthase A (245 aa).

Catalysis depends on aspartate 52, which acts as the Nucleophile. Residue tyrosine 111 coordinates substrate.

Belongs to the tRNA pseudouridine synthase TruA family. In terms of assembly, homodimer.

It carries out the reaction uridine(38/39/40) in tRNA = pseudouridine(38/39/40) in tRNA. Formation of pseudouridine at positions 38, 39 and 40 in the anticodon stem and loop of transfer RNAs. This Rickettsia akari (strain Hartford) protein is tRNA pseudouridine synthase A.